A 587-amino-acid chain; its full sequence is Pectinesterase 2 (587 aa).

The first 40 residues, 1–40 (MAPIKEFISKFSDFKNNKKLILSSAAIALLLLASIVGIAA), serve as a signal peptide directing secretion. Asn-99 and Asn-218 each carry an N-linked (GlcNAc...) asparagine glycan. Substrate-binding residues include Thr-351 and Gln-381. The active-site Proton donor is Asp-404. Cys-418 and Cys-438 are joined by a disulfide. The active-site Nucleophile is Asp-425. 2 residues coordinate substrate: Arg-493 and Trp-495.

In the N-terminal section; belongs to the PMEI family. It in the C-terminal section; belongs to the pectinesterase family. As to expression, expressed in flower buds.

It localises to the secreted. It is found in the cell wall. The enzyme catalyses [(1-&gt;4)-alpha-D-galacturonosyl methyl ester](n) + n H2O = [(1-&gt;4)-alpha-D-galacturonosyl](n) + n methanol + n H(+). It functions in the pathway glycan metabolism; pectin degradation; 2-dehydro-3-deoxy-D-gluconate from pectin: step 1/5. Its function is as follows. Acts in the modification of cell walls via demethylesterification of cell wall pectin. This chain is Pectinesterase 2 (PME2), found in Arabidopsis thaliana (Mouse-ear cress).